The sequence spans 436 residues: Putative UDP-arabinose 4-epimerase 4 (436 aa).

Residues 1–20 (MLNSSGVRTQRRSPRPLSLG) are disordered. The Cytoplasmic segment spans residues 1 to 60 (MLNSSGVRTQRRSPRPLSLGGRKIITPTKFAYDHHNPDKVLDFVEMDCLEPKTKNNLTGK). The helical; Signal-anchor for type II membrane protein transmembrane segment at 61-81 (LLLVASLLILAIIVISQSSSF) threads the bilayer. Over 82 to 436 (TSPSAFSQRE…KIHPHGYNSY (355 aa)) the chain is Lumenal. NAD(+) is bound at residue 96-127 (HVLVTGGAGYIGSHAALRLLRDSYRVTIVDNL). The active-site Proton acceptor is the Y244.

Belongs to the NAD(P)-dependent epimerase/dehydratase family. NAD(+) is required as a cofactor.

The protein resides in the golgi apparatus. The protein localises to the golgi stack membrane. The enzyme catalyses UDP-beta-L-arabinopyranose = UDP-alpha-D-xylose. Its pathway is nucleotide-sugar biosynthesis; UDP-L-arabinose biosynthesis; UDP-L-arabinose from UDP-alpha-D-xylose: step 1/1. The protein operates within cell wall biogenesis; cell wall polysaccharide biosynthesis. In Arabidopsis thaliana (Mouse-ear cress), this protein is Putative UDP-arabinose 4-epimerase 4.